The primary structure comprises 140 residues: MAPITFHLDVVSAEKRIFSGRVETFQVTGSEGELGIFHGHTPLLSAIKPGMVRIVKQHGHEEFIYVSGGMVEVQPGTATVLADTAIRGEDLDAAKAEEAKRRAEEKIQNQHGDMDFAQAASELAKAIAQLRVIELTKKRR.

Belongs to the ATPase epsilon chain family. F-type ATPases have 2 components, CF(1) - the catalytic core - and CF(0) - the membrane proton channel. CF(1) has five subunits: alpha(3), beta(3), gamma(1), delta(1), epsilon(1). CF(0) has three main subunits: a, b and c.

The protein localises to the cell inner membrane. In terms of biological role, produces ATP from ADP in the presence of a proton gradient across the membrane. The sequence is that of ATP synthase epsilon chain from Vibrio parahaemolyticus serotype O3:K6 (strain RIMD 2210633).